The primary structure comprises 1116 residues: uncharacterized protein (1116 aa).

EF-hand domains follow at residues 8 to 43 (EEQT…SGLA), 42 to 77 (LAPQ…VALA), 166 to 201 (LSTE…INLL), and 292 to 327 (LPED…IKLK). EH domains are found at residues 9-106 (EQTA…DSSK), 134-224 (EMTR…AAST), and 259-348 (DLTS…VAPL). Ca(2+)-binding residues include D305, N307, N309, K311, and E316. 7 disordered regions span residues 360–454 (PSVV…NSPT), 703–774 (SVNL…ASTV), 812–890 (TSLS…NTSA), 909–978 (PFAT…SPQI), 1004–1024 (TTTH…ENQY), 1044–1066 (SNEV…DDEL), and 1095–1116 (QAAE…AGHH). Pro residues predominate over residues 371–381 (NPNPTLAPNPT). Polar residues predominate over residues 401–416 (FSPTLAPQHTSSNATK). Residues 565-707 (KAQTEQVNRE…EDGLKSVNLT (143 aa)) are a coiled coil. The segment covering 723 to 749 (SFTSNGITTDKPTLPDTTSSVPTQHNS) has biased composition (polar residues). Low complexity-rich tracts occupy residues 755–774 (NTLR…ASTV) and 812–827 (TSLS…SLDS). Over residues 864–890 (SKLTGSARNTAEPVENTSAEPIENTSA) the composition is skewed to polar residues. Residues 957-969 (EIDDDESSSDEEP) are compositionally biased toward acidic residues. Composition is skewed to acidic residues over residues 1055–1066 (TANESDNDDDEL) and 1104–1116 (NSST…AGHH).

It is found in the cytoplasm. Its subcellular location is the cytoskeleton. This is an uncharacterized protein from Schizosaccharomyces pombe (strain 972 / ATCC 24843) (Fission yeast).